We begin with the raw amino-acid sequence, 130 residues long: Small ribosomal subunit protein bS16 (130 aa).

The segment at Ala-80–Glu-130 is disordered. Basic and acidic residues predominate over residues Lys-99–Ala-109. A compositionally biased stretch (low complexity) spans Lys-110 to Glu-130.

Belongs to the bacterial ribosomal protein bS16 family.

The polypeptide is Small ribosomal subunit protein bS16 (Jannaschia sp. (strain CCS1)).